Consider the following 412-residue polypeptide: Autophagy-related protein 34 (412 aa).

An AMS1-binding region spans residues 246-348; sequence NDPLLHVEVS…SNEITLKSPL (103 aa).

In terms of assembly, interacts with AMS1, ATG8 and ATG11.

The protein resides in the preautophagosomal structure membrane. In terms of biological role, cargo-receptor protein involved in the cytoplasm to vacuole transport (Cvt) and in autophagy. Recognizes cargo proteins, such as AMS1 and delivers them to the pre-autophagosomal structure for eventual engulfment by the autophagosome and targeting to the vacuole. This chain is Autophagy-related protein 34 (ATG34), found in Saccharomyces cerevisiae (strain ATCC 204508 / S288c) (Baker's yeast).